The chain runs to 242 residues: MSGFFITATDTEVGKTVVAGAIAGVFRELGYNVGVYKPLQSGHVASNPEGDAARLKSLSGVPTQENEICPYSIEEPLAPRLAMKRAGRVVKLKEITDYYNGLLKEFNSLFVEGAGGLAVPYTEDALVIDFAKELQLPLIVVARPTLGTVNHTVLTIAYAKAHGLTVAGVILSGCKECEMERVKENKEMIEELSGVPVLGLLPFFAGEFTKEEVLESAKEHIMISKLEEFIQNESNVAGAPSM.

An ATP-binding site is contributed by 12–17 (EVGKTV). Thr-16 is a Mg(2+) binding site. Lys-37 is a catalytic residue. Substrate is bound at residue Ser-41. ATP is bound by residues Asp-51 and 112 to 115 (EGAG). Residues Asp-51 and Glu-112 each coordinate Mg(2+).

The protein belongs to the dethiobiotin synthetase family. Homodimer. It depends on Mg(2+) as a cofactor.

The protein localises to the cytoplasm. It catalyses the reaction (7R,8S)-7,8-diammoniononanoate + CO2 + ATP = (4R,5S)-dethiobiotin + ADP + phosphate + 3 H(+). The protein operates within cofactor biosynthesis; biotin biosynthesis; biotin from 7,8-diaminononanoate: step 1/2. Catalyzes a mechanistically unusual reaction, the ATP-dependent insertion of CO2 between the N7 and N8 nitrogen atoms of 7,8-diaminopelargonic acid (DAPA, also called 7,8-diammoniononanoate) to form a ureido ring. This chain is ATP-dependent dethiobiotin synthetase BioD, found in Bacillus cereus (strain B4264).